The sequence spans 295 residues: Putative aquaporin-12B (295 aa).

Residues 1 to 22 (MAGLNVSLSFFFATFTLCEAAR) are Cytoplasmic-facing. The chain crosses the membrane as a helical span at residues 23-41 (RASKALLPVGAYEVFAREA). Topologically, residues 42–55 (MRTLVELGPWAGDF) are extracellular. Residues 56-74 (GPDLLLTLLFLLFLAHGVT) traverse the membrane as a helical segment. At 75 to 76 (LD) the chain is on the cytoplasmic side. An intramembrane region (discontinuously helical) is located at residues 77–114 (GASANPTVSLQEFLMAEESLPGTLLKLAAQGLGMQAAC). The NPA 1 signature appears at 81 to 83 (NPT). Residues 115–120 (TLTRLC) are Cytoplasmic-facing. The chain crosses the membrane as a helical span at residues 121-142 (WAWELSDLHLLQSLMAQSCSSA). Residues 143–145 (LRT) lie on the Extracellular side of the membrane. A helical transmembrane segment spans residues 146-166 (SVPHGALVEAACAFCFHLTLL). The Cytoplasmic segment spans residues 167–174 (HLRHSPPA). A helical membrane pass occupies residues 175 to 191 (YSGPAVALLVTVTAYTA). Over 192–194 (GPF) the chain is Extracellular. Positions 195–206 (TSAFFNPALAAS) form an intramembrane region, discontinuously helical. An NPA 2 motif is present at residues 200 to 202 (NPA). Residues 207–223 (VTFACSGHTLLEYVQVY) lie on the Extracellular side of the membrane. Residues 224–244 (WLGPLTGMVLAVLLHQGRLPH) form a helical membrane-spanning segment. Residues 245–295 (LFQRNLFYGQKNKYRAPRGKPAPASGDTQTPAKGSSVREPGRSGVEGPHSS) are Cytoplasmic-facing. The segment at 257–295 (KYRAPRGKPAPASGDTQTPAKGSSVREPGRSGVEGPHSS) is disordered.

The protein belongs to the MIP/aquaporin (TC 1.A.8) family. AQP11/AQP12 subfamily. Homotetramer; each monomer provides an independent water pore.

It localises to the membrane. It catalyses the reaction H2O(in) = H2O(out). Functionally, putative aquaporin. Could form homotetrameric transmembrane channels, with each monomer independently mediating water transport across the plasma membrane along its osmotic gradient. The chain is Putative aquaporin-12B from Homo sapiens (Human).